The chain runs to 155 residues: Interleukin-2 (155 aa).

The first 20 residues, 1–20 (MYKMQLLSCIALTLVLVANS), serve as a signal peptide directing secretion. O-linked (GalNAc...) threonine glycosylation is present at Thr24. An intrachain disulfide couples Cys79 to Cys127. A glycan (N-linked (GlcNAc...) asparagine) is linked at Asn112.

It belongs to the IL-2 family.

Its subcellular location is the secreted. Functionally, cytokine produced by activated CD4-positive helper T-cells and to a lesser extend activated CD8-positive T-cells and natural killer (NK) cells that plays pivotal roles in the immune response and tolerance. Binds to a receptor complex composed of either the high-affinity trimeric IL-2R (IL2RA/CD25, IL2RB/CD122 and IL2RG/CD132) or the low-affinity dimeric IL-2R (IL2RB and IL2RG). Interaction with the receptor leads to oligomerization and conformation changes in the IL-2R subunits resulting in downstream signaling starting with phosphorylation of JAK1 and JAK3. In turn, JAK1 and JAK3 phosphorylate the receptor to form a docking site leading to the phosphorylation of several substrates including STAT5. This process leads to activation of several pathways including STAT, phosphoinositide-3-kinase/PI3K and mitogen-activated protein kinase/MAPK pathways. Functions as a T-cell growth factor and can increase NK-cell cytolytic activity as well. Promotes strong proliferation of activated B-cells and subsequently immunoglobulin production. Plays a pivotal role in regulating the adaptive immune system by controlling the survival and proliferation of regulatory T-cells, which are required for the maintenance of immune tolerance. Moreover, participates in the differentiation and homeostasis of effector T-cell subsets, including Th1, Th2, Th17 as well as memory CD8-positive T-cells. This Canis lupus familiaris (Dog) protein is Interleukin-2 (IL2).